The primary structure comprises 623 residues: Chaperone protein HtpG (623 aa).

The interval M1 to R341 is a; substrate-binding. The segment at E342–K549 is b. The tract at residues I550 to K623 is c.

Belongs to the heat shock protein 90 family. Homodimer.

It localises to the cytoplasm. Molecular chaperone. Has ATPase activity. The chain is Chaperone protein HtpG from Clostridium perfringens (strain ATCC 13124 / DSM 756 / JCM 1290 / NCIMB 6125 / NCTC 8237 / Type A).